A 160-amino-acid chain; its full sequence is Variant surface antigen C (160 aa).

The N-terminal stretch at 1-29 (MKKSIFSKKLLVSFGSLVALASIPLIAIS) is a signal peptide. C30 carries the N-palmitoyl cysteine lipid modification. C30 carries the S-diacylglycerol cysteine lipid modification. The disordered stretch occupies residues 32 to 160 (QTNTDKSQQP…SSESGSQKTT (129 aa)). 2 stretches are compositionally biased toward low complexity: residues 38-54 (SQQPGSGSSTSGDQSGT) and 62-87 (SGTSTSGGQSGTTSGSGTTTGEQTET). 6 repeat units span residues 86-97 (ETAPKSPESGSQ), 98-109 (EATPKSPESGSQ), 110-121 (EATPKSPESGSQ), 122-133 (EAAPKSSESGSQ), 134-145 (EAAPKSSESGSQ), and 146-157 (EAAPKSSESGSQ). The segment at 86–157 (ETAPKSPESG…APKSSESGSQ (72 aa)) is 6 X 12 AA tandem repeats. Residues 93-160 (ESGSQEATPK…SSESGSQKTT (68 aa)) are compositionally biased toward polar residues.

It localises to the cell membrane. Its function is as follows. Responsible for the antigenic diversity for host adaptation. This Mesomycoplasma hyorhinis (Mycoplasma hyorhinis) protein is Variant surface antigen C (vlpC).